Consider the following 258-residue polypeptide: Pimeloyl-[acyl-carrier protein] methyl ester esterase (258 aa).

The AB hydrolase-1 domain occupies 16–241 (LVLLHGWGLN…GSAHAPFVSH (226 aa)). Residues Trp-22, 82 to 83 (SM), and 143 to 147 (FLALQ) contribute to the substrate site. Ser-82 acts as the Nucleophile in catalysis. Residues Asp-207 and His-235 contribute to the active site. His-235 serves as a coordination point for substrate.

Belongs to the AB hydrolase superfamily. Carboxylesterase BioH family. In terms of assembly, monomer.

It localises to the cytoplasm. It carries out the reaction 6-carboxyhexanoyl-[ACP] methyl ester + H2O = 6-carboxyhexanoyl-[ACP] + methanol + H(+). Its pathway is cofactor biosynthesis; biotin biosynthesis. In terms of biological role, the physiological role of BioH is to remove the methyl group introduced by BioC when the pimeloyl moiety is complete. It allows to synthesize pimeloyl-ACP via the fatty acid synthetic pathway through the hydrolysis of the ester bonds of pimeloyl-ACP esters. This is Pimeloyl-[acyl-carrier protein] methyl ester esterase from Yersinia enterocolitica serotype O:8 / biotype 1B (strain NCTC 13174 / 8081).